The sequence spans 88 residues: Small ribosomal subunit protein uS17 (88 aa).

This sequence belongs to the universal ribosomal protein uS17 family. In terms of assembly, part of the 30S ribosomal subunit.

Functionally, one of the primary rRNA binding proteins, it binds specifically to the 5'-end of 16S ribosomal RNA. The chain is Small ribosomal subunit protein uS17 from Saccharophagus degradans (strain 2-40 / ATCC 43961 / DSM 17024).